The chain runs to 2467 residues: Polyprotein P1234 (2467 aa).

The Alphavirus-like MT domain maps to 27–258; sequence ESQQVTPNDH…ESRKLLRSWH (232 aa). The nsP1 membrane-binding stretch occupies residues 243-262; that stretch reads GSTLYTESRKLLRSWHLPSV. 2 S-palmitoyl cysteine; by host lipidation sites follow: Cys-416 and Cys-418. One can recognise a (+)RNA virus helicase ATP-binding domain in the interval 689–841; that stretch reads DLINPPFHEF…HNICTRVLHK (153 aa). Position 720–727 (720–727) interacts with a ribonucleoside 5'-triphosphate; sequence GVPGSGKS. Residues 842–990 form the (+)RNA virus helicase C-terminal domain; sequence SISRRCTLPV…LEEWHEEHDG (149 aa). A Peptidase C9 domain is found at 1003 to 1325; sequence DPFQNKAKVC…QKLSSMYACN (323 aa). Residues 1004–1023 form a nucleolus localization signal region; sequence PFQNKAKVCWAKCLVQVLET. Cys-1012 (for cysteine protease nsP2 activity) is an active-site residue. Positions 1056–1065 match the Nuclear export signal motif; the sequence is TRYYGVDLDS. The active-site For cysteine protease nsP2 activity is His-1081. The Nuclear localization signal motif lies at 1180 to 1184; sequence PHKRV. Residues 1333–1492 form the Macro domain; it reads APSYRVRRAD…KIQEAIDRRT (160 aa). Positions 1342, 1356, 1364, 1444, and 1446 each coordinate ADP-D-ribose. The Zn(2+) site is built by Cys-1594, Cys-1596, Cys-1619, and Cys-1637. Residues 1768-1803 form a disordered region; sequence KVATEPPLEPEAPIPAPRKRRTTSTSPPHNPEDFVP. Residues 1774-1783 are compositionally biased toward pro residues; it reads PLEPEAPIPA. 2 consecutive short sequence motifs (FGDF; binding to host G3BP1) follow at residues 1820–1823 and 1841–1844; these read FGDL and FGDI. A RdRp catalytic domain is found at 2221–2336; that stretch reads DAVLETDIAS…HGVRSDPLMA (116 aa).

In terms of assembly, interacts with non-structural protein 3. Interacts with RNA-directed RNA polymerase nsP4. Interacts with protease nsP2. interacts with itself. As to quaternary structure, interacts with mRNA-capping enzyme nsP1. Interacts with host DDX1. Interacts with host DDX3. Interacts (via C-terminus) with host G3BP1; this interaction inhibits the formation of host stress granules on viral mRNAs and the nsp3-G3BP1 complexes bind viral RNAs and probably orchestrate the assembly of viral replication complexes. Interacts (via C-terminus) with host G3BP2; this interaction inhibits the formation of host stress granules on viral mRNAs and the nsp3-G3BP2 complexes bind viral RNAs and probably orchestrate the assembly of viral replication complexes. Interacts with mRNA-capping enzyme nsP1. Interacts with protease nsP2. interacts with itself. In terms of assembly, interacts with RNA-directed RNA polymerase nsP4. Interacts with mRNA-capping enzyme nsP1. Interacts with KPNA1/karyopherin-alpha1; this interaction probably allows the active transport of protease nsP2 into the host nucleus. The cofactor is Mg(2+). Requires Mn(2+) as cofactor. Post-translationally, specific enzymatic cleavages in vivo yield mature proteins. The processing of the polyprotein is temporally regulated. In early stages (1.7 hpi), P1234 is first cleaved in trans through its nsP2 protease activity, releasing P123' and nsP4, which associate to form the early replication complex. At the same time, P1234 is also cut at the nsP1/nsP2 site early in infection but with lower efficiency. After replication of the viral minus-strand RNAs (4 hpi), the polyproteins are cut at the nsP1/nsP2 and nsP2/nsP3 sites very efficiently, preventing accumulation of P123' and P1234 and allowing the formation of the late replication complex. NsP3'/nsP4 site is not cleaved anymore and P34 is produced rather than nsP4. In terms of processing, specific enzymatic cleavages in vivo yield mature proteins. The processing of the polyprotein is temporally regulated. In early stages (1.7 hpi), P123 is cleaved at the nsP1/nsP2 site with low efficiency. After replication of the viral minus-strand RNAs (4 hpi), the polyproteins are cut at the nsP1/nsP2 and nsP2/nsP3 sites very efficiently, preventing accumulation of P123 and allowing the formation of the late replication complex. Palmitoylated by host palmitoyltransferases ZDHHC2 and ZDHHC19. Post-translationally, phosphorylated by host on serines and threonines. In terms of processing, ubiquitinated; targets the protein for rapid degradation via the ubiquitin system. Nsp4 is present in extremely low quantities due to low frequency of translation through the amber stop-codon and the degradation by the ubiquitin pathway.

The protein resides in the host cytoplasmic vesicle membrane. It localises to the host cell membrane. It is found in the host cell projection. The protein localises to the host filopodium. Its subcellular location is the host nucleus. The protein resides in the host cytoplasm. The catalysed reaction is GTP + S-adenosyl-L-methionine = N(7)-methyl-GTP + S-adenosyl-L-homocysteine. It carries out the reaction N(7)-methyl-GTP + L-histidyl-[protein] = N(tele)-(N(7)-methylguanosine 5'-phospho)-L-histidyl-[protein] + diphosphate. The enzyme catalyses N(tele)-(N(7)-methylguanosine 5'-phospho)-L-histidyl-[protein] + a 5'-end diphospho-(purine-ribonucleoside) in mRNA + H(+) = a 5'-end (N(7)-methyl 5'-triphosphoguanosine)-(purine-ribonucleoside) in mRNA + L-histidyl-[protein]. It catalyses the reaction a 5'-end triphospho-ribonucleoside in mRNA + H2O = a 5'-end diphospho-ribonucleoside in mRNA + phosphate + H(+). The catalysed reaction is a ribonucleoside 5'-triphosphate + H2O = a ribonucleoside 5'-diphosphate + phosphate + H(+). It carries out the reaction ATP + H2O = ADP + phosphate + H(+). The enzyme catalyses RNA(n) + a ribonucleoside 5'-triphosphate = RNA(n+1) + diphosphate. It catalyses the reaction RNA(n) + ATP = RNA(n)-3'-adenine ribonucleotide + diphosphate. The catalysed reaction is 4-O-(ADP-D-ribosyl)-L-aspartyl-[protein] + H2O = L-aspartyl-[protein] + ADP-D-ribose + H(+). It carries out the reaction 5-O-(ADP-D-ribosyl)-L-glutamyl-[protein] + H2O = L-glutamyl-[protein] + ADP-D-ribose + H(+). The enzyme catalyses ADP-alpha-D-ribose 1''-phosphate + H2O = ADP-D-ribose + phosphate. In terms of biological role, inactive precursor of the viral replicase, which is activated by cleavages carried out by the viral protease nsP2. Functionally, the early replication complex formed by the polyprotein P123 and nsP4 synthesizes minus-strand RNAs. As soon P123 is cleaved into mature proteins, the plus-strand RNAs synthesis begins. The early replication complex formed by the polyprotein P123' and nsP4 synthesizes minus-strand RNAs. Polyprotein P123' is a short-lived polyprotein that accumulates during early stage of infection. As soon P123' is cleaved into mature proteins, the plus-strand RNAs synthesis begins. Its function is as follows. Cytoplasmic capping enzyme that catalyzes two virus-specific reactions: methyltransferase and nsP1 guanylyltransferase. mRNA-capping is necessary since all viral RNAs are synthesized in the cytoplasm, and host capping enzymes are restricted to the nucleus. The enzymatic reaction involves a covalent link between 7-methyl-GMP and nsP1, whereas eukaryotic capping enzymes form a covalent complex only with GMP. nsP1 capping consists in the following reactions: GTP is first methylated into 7-methyl-GMP and then is covalently linked to nsP1 to form the m7GMp-nsP1 complex from which 7-methyl-GMP complex is transferred to the mRNA to create the cap structure. NsP1 is needed for the initiation of the minus-strand RNAs synthesis. Probably serves as a membrane anchor for the replication complex composed of nsP1-nsP4. Palmitoylated nsP1 is remodeling host cell cytoskeleton, and induces filopodium-like structure formation at the surface of the host cell. In terms of biological role, multifunctional protein whose N-terminus is part of the RNA polymerase complex and displays NTPase, RNA triphosphatase and helicase activities. NTPase and RNA triphosphatase are involved in viral RNA capping and helicase keeps a check on the dsRNA replication intermediates. The C-terminus harbors a protease that specifically cleaves the polyproteins and releases the mature proteins. Required for the shutoff of minus-strand RNAs synthesis. Specifically inhibits the host IFN response by promoting the nuclear export of host STAT1. Also inhibits host transcription by inducing rapid proteasome-dependent degradation of POLR2A, a catalytic subunit of the RNAPII complex. The resulting inhibition of cellular protein synthesis serves to ensure maximal viral gene expression and to evade host immune response. Functionally, seems to be essential for minus-strand RNAs and subgenomic 26S mRNAs synthesis. Displays mono-ADP-ribosylhydrolase activity. ADP-ribosylation is a post-translational modification that controls various processes of the host cell and the virus probably needs to revert it for optimal viral replication. Binds proteins of FXR family and sequesters them into the viral RNA replication complexes thereby inhibiting the formation of host stress granules on viral mRNAs. The nsp3'-FXR complexes bind viral RNAs and probably orchestrate the assembly of viral replication complexes, thanks to the ability of FXR family members to self-assemble and bind DNA. Seems to be essential for minus-strand RNAs and subgenomic 26S mRNAs synthesis. Displays mono-ADP-ribosylhydrolase activity. ADP-ribosylation is a post-translantional modification that controls various processes of the host cell and the virus probably needs to revert it for optimal viral replication. Binds proteins of G3BP family and sequesters them into the viral RNA replication complexes thereby inhibiting the formation of host stress granules on viral mRNAs. The nsp3-G3BP complexes bind viral RNAs and probably orchestrate the assembly of viral replication complexes, thanks to the ability of G3BP family members to self-assemble and bind DNA. Its function is as follows. RNA dependent RNA polymerase. Replicates genomic and antigenomic RNA by recognizing replications specific signals. The early replication complex formed by the polyprotein P123 and nsP4 synthesizes minus-strand RNAs. The late replication complex composed of fully processed nsP1-nsP4 is responsible for the production of genomic and subgenomic plus-strand RNAs. The core catalytic domain of nsP4 also possesses terminal adenylyltransferase (TATase) activity that is probably involved in maintenance and repair of the poly(A) tail, an element required for replication of the viral genome. The polypeptide is Polyprotein P1234 (Getah virus (GETV)).